The primary structure comprises 468 residues: F-box/LRR-repeat protein At4g14096 (468 aa).

Residues 7–60 (RDIISSLPEAISCHILSFLPTKEAASTSVLSKKWRYLFAFVPNLDLDESVYLNP) form the F-box domain. LRR repeat units follow at residues 114 to 136 (VSDL…MFLS), 138 to 167 (TLVR…YIDS), 169 to 194 (YFEK…VLDD), 216 to 241 (STQV…KFTD), 292 to 323 (TLYL…TIES), and 324 to 349 (NPEV…IFQG).

In Arabidopsis thaliana (Mouse-ear cress), this protein is F-box/LRR-repeat protein At4g14096.